We begin with the raw amino-acid sequence, 341 residues long: Methionine import ATP-binding protein MetN (341 aa).

An ABC transporter domain is found at 2–241; sequence IELNQIVKRY…PQHDVTKRFV (240 aa). 38-45 is a binding site for ATP; it reads GFSGAGKS.

Belongs to the ABC transporter superfamily. Methionine importer (TC 3.A.1.24) family. In terms of assembly, the complex is composed of two ATP-binding proteins (MetN), two transmembrane proteins (MetI) and a solute-binding protein (MetQ).

Its subcellular location is the cell membrane. The catalysed reaction is L-methionine(out) + ATP + H2O = L-methionine(in) + ADP + phosphate + H(+). It catalyses the reaction D-methionine(out) + ATP + H2O = D-methionine(in) + ADP + phosphate + H(+). Part of the ABC transporter complex MetNIQ involved in methionine import. Responsible for energy coupling to the transport system. In Staphylococcus saprophyticus subsp. saprophyticus (strain ATCC 15305 / DSM 20229 / NCIMB 8711 / NCTC 7292 / S-41), this protein is Methionine import ATP-binding protein MetN.